Consider the following 266-residue polypeptide: Undecaprenyl-diphosphatase (266 aa).

8 helical membrane passes run 2–22 (INIL…FLPI), 39–59 (LPII…IIYY), 86–106 (LKLI…GTFI), 112–132 (MFIL…ILML), 145–165 (ILLV…PGIS), 184–204 (AFEI…LFKY), 212–232 (MVLN…VGII), and 246–266 (LYYF…FFRI).

Belongs to the UppP family.

It is found in the cell inner membrane. It carries out the reaction di-trans,octa-cis-undecaprenyl diphosphate + H2O = di-trans,octa-cis-undecaprenyl phosphate + phosphate + H(+). Catalyzes the dephosphorylation of undecaprenyl diphosphate (UPP). Confers resistance to bacitracin. The polypeptide is Undecaprenyl-diphosphatase (Borrelia garinii subsp. bavariensis (strain ATCC BAA-2496 / DSM 23469 / PBi) (Borreliella bavariensis)).